The following is a 99-amino-acid chain: MALTKAEMSEYLFDKLGLSKRDAKELVELFFEEIRRALENGEQVKLSGFGNFDLRDKNQRPGRNPKTGEDIPITARRVVTFRPGQKLKSRVENASPKEE.

Residues 49–75 (FGNFDLRDKNQRPGRNPKTGEDIPITA) form a disordered region.

Belongs to the bacterial histone-like protein family. As to quaternary structure, heterodimer of an alpha and a beta chain.

This protein is one of the two subunits of integration host factor, a specific DNA-binding protein that functions in genetic recombination as well as in transcriptional and translational control. The chain is Integration host factor subunit alpha from Salmonella agona (strain SL483).